Consider the following 711-residue polypeptide: Protein mono-ADP-ribosyltransferase PARP12 (711 aa).

3 consecutive C3H1-type zinc fingers follow at residues 103–128, 164–188, and 189–211; these read LCKF…HNLK, ICLH…IKLH, and ICQY…HEFT. Residues 247-279 form a disordered region; the sequence is SALSKVSPSPAGPQGSSERKDSSGPVSPGTPSQ. The residue at position 268 (Ser-268) is a Phosphoserine. 2 C3H1-type zinc fingers span residues 280–307 and 281–306; these read EESE…HFHL and ESEQ…VHFH. WWE domains follow at residues 308-371 and 374-468; these read PYRW…RLST and SVTK…KVCR. Cys-484 is subject to ADP-ribosylcysteine. One can recognise a PARP catalytic domain in the interval 494–708; the sequence is IPDYWDPAAL…IFVALGNLFT (215 aa). ADP-ribosyl aspartic acid occurs at positions 610 and 621.

It belongs to the ARTD/PARP family. In terms of assembly, interacts with PARP11; this interaction plays a key role in zika virus suppression. Interacts with ISG15. Auto-mono-ADP-ribosylated. In terms of processing, phosphorylated by PRKD1.

It localises to the nucleus. Its subcellular location is the golgi apparatus. The protein resides in the trans-Golgi network. It is found in the cytoplasm. The protein localises to the stress granule. The catalysed reaction is L-aspartyl-[protein] + NAD(+) = 4-O-(ADP-D-ribosyl)-L-aspartyl-[protein] + nicotinamide. The enzyme catalyses L-cysteinyl-[protein] + NAD(+) = S-(ADP-D-ribosyl)-L-cysteinyl-[protein] + nicotinamide + H(+). Its function is as follows. Mono-ADP-ribosyltransferase that mediates mono-ADP-ribosylation of target proteins. Displays anti-alphavirus activity during IFN-gamma immune activation by directly ADP-ribosylating the alphaviral non-structural proteins nsP3 and nsP4. Acts as a component of the PRKD1-driven regulatory cascade that selectively controls a major branch of the basolateral transport pathway by catalyzing the MARylation of GOLGA1. Acts also as a key regulator of mitochondrial function, protein translation, and inflammation. Inhibits PINK1/Parkin-dependent mitophagy and promotes cartilage degeneration by inhibiting the ubiquitination and SUMOylation of MFN1/2 by upregulating ISG15 and ISGylation. The chain is Protein mono-ADP-ribosyltransferase PARP12 from Mus musculus (Mouse).